A 455-amino-acid chain; its full sequence is Retinoic acid receptor beta (455 aa).

The tract at residues 1 to 87 (MTTSSRTCPV…PLPPPRVYKP (87 aa)) is modulating. Positions 45–78 (QSHPPTSGCSTPSPASVETQSTSSEELVPSPPSP) are disordered. The span at 47-66 (HPPTSGCSTPSPASVETQST) shows a compositional bias: polar residues. 2 NR C4-type zinc fingers span residues 88–108 (CFVCQDKSSGYHYGVSACEGC) and 124–148 (CHRDKNCVINKVTRNRCQYCRLQKC). A DNA-binding region (nuclear receptor) is located at residues 88–153 (CFVCQDKSSG…RLQKCFEVGM (66 aa)). A hinge region spans residues 154-182 (SKESVRNDRNKKKKEPTKQESTENYEMTA). The NR LBD domain maps to 183-417 (ELDDLTEKIR…PLIQEMLENS (235 aa)). A disordered region spans residues 416-455 (NSEGHEPLTPTSNGNTAEHSPSISPSSVDNSSVSQSPMVQ). Polar residues predominate over residues 424–434 (TPTSNGNTAEH). Over residues 435–455 (SPSISPSSVDNSSVSQSPMVQ) the composition is skewed to low complexity.

It belongs to the nuclear hormone receptor family. NR1 subfamily. In terms of assembly, heterodimer; with a RXR molecule. Binds DNA preferentially as a RAR/RXR heterodimer. As to expression, both isoforms expressed in heart, lung, kidney, liver, brain, lung and testis. Isoform Beta-1 is highly expressed in testes and brain. Levels increase during testes maturation. Isoform beta-2 is predominant in heart, kidney and lung.

It is found in the nucleus. Its function is as follows. Receptor for retinoic acid. Retinoic acid receptors bind as heterodimers to their target response elements in response to their ligands, all-trans or 9-cis retinoic acid, and regulate gene expression in various biological processes. The RAR/RXR heterodimers bind to the retinoic acid response elements (RARE) composed of tandem 5'-AGGTCA-3' sites known as DR1-DR5. May be required for Sertoli cell differentiation and spermatogenesis. This is Retinoic acid receptor beta (RARB) from Coturnix japonica (Japanese quail).